We begin with the raw amino-acid sequence, 603 residues long: MAKEIILGIDLGTTNSCVAVIENKKPIVLENPEGKRTVPSVVSFNGDEVLVGDAAKRKQITNPNTISSIKRLMGTKEKVTVLNKDYTPEEISAKILTYIKEYAEKKIGAKVNKAVITVPAYFDDAQRQATKNAGIIAGLSVERIINEPTAAALAYGIDKLDKEQKILVFDLGGGTFDVSVLDMADGTFEVLSTSGDNHLGGDDWDQVIINWLLKSIADEFNIDLSKNKMAMQRLKDAAEKAKIELSGINTTTISLPFIAMDSSGQPINFEKELNRATFDNLTKNLIERLKKPVLDAMKESKLSLVDIDQVLMVGGSTRMPAVQNLVKELTGKEPNHSLNPDEVVAIGAAIQGGVLAGEIDDILLLDVTPLTLSIETMGGVATPLIPRNTKIPVSKSQIFSTAADNQPSVDIRIVQGERSLAADNKLLGNFELSGIEPAPRGVPQIEIKFNIDANGIMSVNAKDLKTQKETSITIKDSQGLSQDEIDKMIKEAEENKEKDAKVKHERELVNRADSLINQLEQVSKTENVPQEQKDVFNKQIEDLTNARDAQDYVKLEAEVKKVEDLLTNAAKFAQQAQQQNPDNQNNNKDDVTEATVTDDSTKK.

Residue T175 is modified to Phosphothreonine; by autocatalysis. Low complexity predominate over residues 573 to 586 (AQQAQQQNPDNQNN). The interval 573–603 (AQQAQQQNPDNQNNNKDDVTEATVTDDSTKK) is disordered. Polar residues predominate over residues 594–603 (ATVTDDSTKK).

This sequence belongs to the heat shock protein 70 family.

Functionally, acts as a chaperone. This is Chaperone protein DnaK from Ureaplasma parvum serovar 3 (strain ATCC 27815 / 27 / NCTC 11736).